The sequence spans 293 residues: MSRTYKATGINLKSMPFGEADRLLTILTREQGLVRAVAPGCRKPKSKLGGRSALFVVNDLMLVQGRSLDKIAQAETLESYPGLSQNLAKLTTSQYLAELTLYQALSGQPQTELWDLFCQQLTQLQNATLAQVPCCLIHGTLKLLAGAGIAPQVHACCVTHQPLDPPTSNPTWRVGFSAGAGGTVTLTGPPRPRTAIQQAAEQAIAYPLGADYRVQGKLSAQELALLQDLNPAEIQPASPLPLPLIATYPLVIWQGVESALRHYAEAYFDRPIRSAALIDTCFTPLPDLTSVPS.

It belongs to the RecO family.

Involved in DNA repair and RecF pathway recombination. This Acaryochloris marina (strain MBIC 11017) protein is DNA repair protein RecO.